Here is a 716-residue protein sequence, read N- to C-terminus: Polyribonucleotide nucleotidyltransferase (716 aa).

The Mg(2+) site is built by D485 and D491. The region spanning 552 to 611 (PRFTTIKIDQDKIKDVIGKGGAVIRELTESTNTNIEIGDDGTIKVAASDQADADAAIEKI) is the KH domain. The S1 motif domain maps to 621 to 689 (GKIYQGKVAR…RQGRVRLSMK (69 aa)). Over residues 689 to 698 (KEAAEKKEEP) the composition is skewed to basic and acidic residues. The disordered stretch occupies residues 689–716 (KEAAEKKEEPAPEAPAEPAAEEENKSEE). The span at 707-716 (AAEEENKSEE) shows a compositional bias: acidic residues.

This sequence belongs to the polyribonucleotide nucleotidyltransferase family. As to quaternary structure, component of the RNA degradosome, which is a multiprotein complex involved in RNA processing and mRNA degradation. It depends on Mg(2+) as a cofactor.

It localises to the cytoplasm. It carries out the reaction RNA(n+1) + phosphate = RNA(n) + a ribonucleoside 5'-diphosphate. Its function is as follows. Involved in mRNA degradation. Catalyzes the phosphorolysis of single-stranded polyribonucleotides processively in the 3'- to 5'-direction. The protein is Polyribonucleotide nucleotidyltransferase of Idiomarina loihiensis (strain ATCC BAA-735 / DSM 15497 / L2-TR).